Reading from the N-terminus, the 311-residue chain is DNA-directed RNA polymerase subunit alpha (311 aa).

The segment at 1–226 (MIEFEKPNIT…EHLDLFTNLT (226 aa)) is alpha N-terminal domain (alpha-NTD). Residues 243–311 (DDRILDRTIE…IDLGLGLKDK (69 aa)) are alpha C-terminal domain (alpha-CTD).

Belongs to the RNA polymerase alpha chain family. In terms of assembly, homodimer. The RNAP catalytic core consists of 2 alpha, 1 beta, 1 beta' and 1 omega subunit. When a sigma factor is associated with the core the holoenzyme is formed, which can initiate transcription.

The enzyme catalyses RNA(n) + a ribonucleoside 5'-triphosphate = RNA(n+1) + diphosphate. In terms of biological role, DNA-dependent RNA polymerase catalyzes the transcription of DNA into RNA using the four ribonucleoside triphosphates as substrates. This chain is DNA-directed RNA polymerase subunit alpha, found in Streptococcus pneumoniae serotype 4 (strain ATCC BAA-334 / TIGR4).